The primary structure comprises 402 residues: Advanced glycosylation end product-specific receptor (402 aa).

The first 22 residues, 1 to 22 (MPAGTAARAWVLVLALWGAVAG), serve as a signal peptide directing secretion. One can recognise an Ig-like V-type domain in the interval 23 to 109 (GQNITARIGE…ATNRRGKEVK (87 aa)). Topologically, residues 23-340 (GQNITARIGE…VGESGLGTLA (318 aa)) are extracellular. 2 N-linked (GlcNAc...) asparagine glycosylation sites follow: Asn-25 and Asn-80. Disulfide bonds link Cys-38-Cys-98 and Cys-143-Cys-206. Ig-like C2-type domains lie at 123-219 (PEIV…RPLN) and 233-315 (PEGI…PPVS). The segment at 295-332 (GTYSCVATHPSHGPQESPPVSIRVTETGDEGPAEGSVG) is disordered. Residues 341–361 (LALGILGGLGVVALLVGAILW) form a helical membrane-spanning segment. At 362–402 (RKRQPRREERKAPESQEDEEERAELNQSEEAEMPENGAGGP) the chain is on the cytoplasmic side. The segment at 365-402 (QPRREERKAPESQEDEEERAELNQSEEAEMPENGAGGP) is disordered. Phosphoserine; by ATM is present on residues Ser-376 and Ser-389. Residues 376–394 (SQEDEEERAELNQSEEAEM) are compositionally biased toward acidic residues.

As to quaternary structure, constitutive homodimer; disulfide-linked. Forms homooligomers. Interacts with S100A1 and APP. Interacts with S100B, S100A12 and S100A14. Interacts with TIRAP. Interacts with HMGB1. Interacts with LGP2; this interaction plays an important role in AGER-mediated pro-inflammatory responses and cytokine release. Interacts with double-strand break repair protein MRE11 which is a core component of the MRN complex; the interaction enhances MRE11 endonuclease activity and promotes DNA repair. Interacts with the MCM2-7 complex via interaction with complex member MCM2; the interaction is increased following DNA replication stress and stabilizes the MCM2-7 complex at replication forks. Post-translationally, phosphorylated on its cytoplasmic domain by PKCzeta/PRKCZ upon ligand binding. Phosphorylated by ATM following DNA damage. In terms of processing, targeted by the ubiquitin E3 ligase subunit FBXO10 to mediate its ubiquitination and degradation. Isoform 1: Expressed at higher levels in the coronary arterioles in type 2 diabetic mice (at protein level). Endothelial cells. Expressed in lung, kidney, brain and heart. Most prevalent isoform with the highest level in heart. Isoform 2: Expressed in brain, lung, kidney and small intestine with the highest level in lung. Expressed in brain, lung, kidney and small intestine with the highest level in small intestine (at protein level). Detected in neurons of the cerebrum, bronchial epithelium, endothelial cells, tubular cells of kidney and epithelial cells of small intestine (at protein level). Expression is increased in the kidney of diabetic wild-type mice (at protein level), but not in the other tissues. Expressed only in kidney. Expression is increased in the kidney of diabetic mice. Isoform 3: Expressed in lung, kidney and heart. The second most prevalent isoform with the highest level in lung. Not expressed in brain. Isoform 4: Expressed at very low level in lung only. Isoform 5: Expressed at very low level in lung only. Isoform 6: Expressed at very low level in lung only. Isoform 7: Expressed at very low level in heart only. Isoform 8: Expressed at very low level in lung only. Isoform 9: Expressed at very low level in heart only. Isoform 10: Expressed in lung, brain, heart and kidney with a very high level in kidney. Isoform 11: Expressed in brain, kidney and heart. Not expressed in lung. Isoform 12: Expressed at very low level in lung and kidney. Isoform 13: Expressed at very low level in lung only.

It is found in the cell membrane. The protein localises to the cell projection. It localises to the phagocytic cup. The protein resides in the early endosome. Its subcellular location is the nucleus. It is found in the secreted. Cell surface pattern recognition receptor that senses endogenous stress signals with a broad ligand repertoire including advanced glycation end products, S100 proteins, high-mobility group box 1 protein/HMGB1, amyloid beta/APP oligomers, nucleic acids, histones, phospholipids and glycosaminoglycans. Advanced glycosylation end products are nonenzymatically glycosylated proteins which accumulate in vascular tissue in aging and at an accelerated rate in diabetes. These ligands accumulate at inflammatory sites during the pathogenesis of various diseases including diabetes, vascular complications, neurodegenerative disorders and cancers, and RAGE transduces their binding into pro-inflammatory responses. Upon ligand binding, uses TIRAP and MYD88 as adapters to transduce the signal ultimately leading to the induction of inflammatory cytokines IL6, IL8 and TNFalpha through activation of NF-kappa-B. Interaction with S100A12 on endothelium, mononuclear phagocytes, and lymphocytes triggers cellular activation, with generation of key pro-inflammatory mediators. Interaction with S100B after myocardial infarction may play a role in myocyte apoptosis by activating ERK1/2 and p53/TP53 signaling. Contributes to the translocation of amyloid-beta peptide (ABPP) across the cell membrane from the extracellular to the intracellular space in cortical neurons. ABPP-initiated RAGE signaling, especially stimulation of p38 mitogen-activated protein kinase (MAPK), has the capacity to drive a transport system delivering ABPP as a complex with RAGE to the intraneuronal space. Participates in endothelial albumin transcytosis together with HMGB1 through the RAGE/SRC/Caveolin-1 pathway, leading to endothelial hyperpermeability. Mediates the loading of HMGB1 in extracellular vesicles (EVs) that shuttle HMGB1 to hepatocytes by transferrin-mediated endocytosis and subsequently promote hepatocyte pyroptosis by activating the NLRP3 inflammasome. Binds to DNA and promotes extracellular hypomethylated DNA (CpG DNA) uptake by cells via the endosomal route to activate inflammatory responses. Mediates phagocytosis by non-professional phagocytes (NPP) and this is enhanced by binding to ligands including RNA, DNA, HMGB1 and histones. Promotes NPP-mediated phagocytosis of Saccharomyces cerevisiae spores by binding to RNA attached to the spore wall. Also promotes NPP-mediated phagocytosis of apoptotic cells. Following DNA damage, recruited to DNA double-strand break sites where it colocalizes with the MRN repair complex via interaction with double-strand break repair protein MRE11. Enhances the endonuclease activity of MRE11, promoting the end resection of damaged DNA. Promotes DNA damage repair in trophoblasts which enhances trophoblast invasion and contributes to placental development and maintenance. Protects cells from DNA replication stress by localizing to damaged replication forks where it stabilizes the MCM2-7 complex and promotes faithful progression of the replication fork. Its function is as follows. Is able to advanced glycosylation end product (AGE)-induce nuclear factor NF-kappa-B activation. Functionally, down-regulates receptor for advanced glycosylation end products (RAGE)-ligand induced signaling through various MAPK pathways including ERK1/2, p38 and SAPK/JNK. Significantly affects tumor cell properties through decreasing cell migration, invasion, adhesion and proliferation, and increasing cellular apoptosis. Exhibits drastic inhibition on tumorigenesis in vitro. The polypeptide is Advanced glycosylation end product-specific receptor (Ager) (Mus musculus (Mouse)).